Here is a 309-residue protein sequence, read N- to C-terminus: Zinc finger protein-like 1 homolog (309 aa).

A B box-type; degenerate zinc finger spans residues 1 to 43 (MGLCKCPKRKVTNLFCYEHRVNVCEFCLVDNHPNCVVQSYLTW). The segment at 53-101 (CSLCKTTLAEGDTIRLNCLHLLHWKCFDEWAANFPATTAPAGYRCPCCS) adopts an RING-type; atypical zinc-finger fold. Residues 200 to 221 (GAESSSDTRPLLQLRDADNEEN) form a disordered region. Residues 254–274 (KIALFVIFLAVLALITIIMVM) traverse the membrane as a helical segment.

Belongs to the ZFPL1 family.

The protein resides in the membrane. This chain is Zinc finger protein-like 1 homolog, found in Caenorhabditis elegans.